Reading from the N-terminus, the 327-residue chain is AA9 family lytic polysaccharide monooxygenase B (327 aa).

An N-terminal signal peptide occupies residues 1 to 19; it reads MKSFTATALAALLAQQAAA. Cu(2+)-binding residues include histidine 20 and histidine 98. An intrachain disulfide couples cysteine 68 to cysteine 192. O2 contacts are provided by histidine 178 and glutamine 187. A Cu(2+)-binding site is contributed by tyrosine 189. Low complexity predominate over residues 264 to 280; that stretch reads SPTTSLTPPVSTSTPAP. Residues 264–284 are disordered; sequence SPTTSLTPPVSTSTPAPGNGG. A CBM1 domain is found at 291–327; the sequence is CTVQKYGQCGGQGYTGCTTCAAGSTCNTTNQWYHQCV. N-linked (GlcNAc...) asparagine glycosylation is present at asparagine 317.

Belongs to the polysaccharide monooxygenase AA9 family. Cu(2+) serves as cofactor.

The protein localises to the secreted. It carries out the reaction [(1-&gt;4)-beta-D-glucosyl]n+m + reduced acceptor + O2 = 4-dehydro-beta-D-glucosyl-[(1-&gt;4)-beta-D-glucosyl]n-1 + [(1-&gt;4)-beta-D-glucosyl]m + acceptor + H2O.. Functionally, lytic polysaccharide monooxygenase (LPMO) that depolymerizes crystalline and amorphous polysaccharides via the oxidation of scissile alpha- or beta-(1-4)-glycosidic bonds, yielding C1 or C4 oxidation products. Catalysis by LPMOs requires the reduction of the active-site copper from Cu(II) to Cu(I) by a reducing agent and H(2)O(2) or O(2) as a cosubstrate. The polypeptide is AA9 family lytic polysaccharide monooxygenase B (LPMO9B) (Podospora anserina (strain S / ATCC MYA-4624 / DSM 980 / FGSC 10383) (Pleurage anserina)).